Consider the following 276-residue polypeptide: Src-like-adapter (276 aa).

G2 is lipidated: N-myristoyl glycine. Positions 22–82 (LDSDFLAVLS…PGICVARVYH (61 aa)) constitute an SH3 domain. In terms of domain architecture, SH2 spans 84-175 (WLFEGLGRDK…GLCCVLTTPC (92 aa)). The tract at residues 212–276 (EGTENPLGVD…FFSSPPYFED (65 aa)) is SLA C-terminal. S253 carries the phosphoserine modification. Position 273 is a phosphotyrosine (Y273).

In terms of assembly, interacts with EPHA2, VAV1, LCP2 and PDGFRB. Homodimer. Homodimerization and interaction with phosphorylated CBL occurs via its C-terminal domain. Interacts with phosphorylated proteins ZAP70, CD3Z, SYK and LAT via its SH2 domain. Expressed in lung and fetal brain. Weakly expressed in heart, adult brain, placenta, liver, skeletal muscle, kidney and pancreas.

The protein resides in the cytoplasm. It localises to the endosome. Adapter protein, which negatively regulates T-cell receptor (TCR) signaling. Inhibits T-cell antigen-receptor induced activation of nuclear factor of activated T-cells. Involved in the negative regulation of positive selection and mitosis of T-cells. May act by linking signaling proteins such as ZAP70 with CBL, leading to a CBL dependent degradation of signaling proteins. The protein is Src-like-adapter (SLA) of Homo sapiens (Human).